Consider the following 203-residue polypeptide: Outer-membrane lipoprotein LolB (203 aa).

An N-terminal signal peptide occupies residues 1–18 (MTLRSFLILLLSSIVLAG). The N-palmitoyl cysteine moiety is linked to residue cysteine 19. Cysteine 19 is lipidated: S-diacylglycerol cysteine.

It belongs to the LolB family. As to quaternary structure, monomer.

It localises to the cell outer membrane. Plays a critical role in the incorporation of lipoproteins in the outer membrane after they are released by the LolA protein. This Vibrio campbellii (strain ATCC BAA-1116) protein is Outer-membrane lipoprotein LolB.